Consider the following 398-residue polypeptide: Acetate kinase (398 aa).

Asn-7 is a Mg(2+) binding site. Lys-14 contributes to the ATP binding site. Residue Arg-91 coordinates substrate. Asp-148 functions as the Proton donor/acceptor in the catalytic mechanism. Residues 208-212 (HIGNG), 283-285 (DMR), and 331-335 (GVGEN) each bind ATP. Glu-384 is a binding site for Mg(2+).

Belongs to the acetokinase family. Homodimer. Mg(2+) is required as a cofactor. It depends on Mn(2+) as a cofactor.

It is found in the cytoplasm. The enzyme catalyses acetate + ATP = acetyl phosphate + ADP. It participates in metabolic intermediate biosynthesis; acetyl-CoA biosynthesis; acetyl-CoA from acetate: step 1/2. Its function is as follows. Catalyzes the formation of acetyl phosphate from acetate and ATP. Can also catalyze the reverse reaction. This chain is Acetate kinase, found in Phocaeicola vulgatus (strain ATCC 8482 / DSM 1447 / JCM 5826 / CCUG 4940 / NBRC 14291 / NCTC 11154) (Bacteroides vulgatus).